We begin with the raw amino-acid sequence, 485 residues long: Cysteine--tRNA ligase (485 aa).

Cys-27 lines the Zn(2+) pocket. A 'HIGH' region motif is present at residues 29-39 (ITAYDFSHIGH). Zn(2+)-binding residues include Cys-208, His-233, and Glu-237. Positions 265–269 (KMSKS) match the 'KMSKS' region motif. Lys-268 is an ATP binding site.

This sequence belongs to the class-I aminoacyl-tRNA synthetase family. As to quaternary structure, monomer. Zn(2+) serves as cofactor.

It localises to the cytoplasm. The enzyme catalyses tRNA(Cys) + L-cysteine + ATP = L-cysteinyl-tRNA(Cys) + AMP + diphosphate. This is Cysteine--tRNA ligase from Lawsonia intracellularis (strain PHE/MN1-00).